Here is a 447-residue protein sequence, read N- to C-terminus: uncharacterized protein (447 aa).

4 residues coordinate [4Fe-4S] cluster: C87, C93, C96, and C162. Q284, Y313, E334, and D375 together coordinate S-adenosyl-L-methionine. The active-site Nucleophile is the C402.

Belongs to the class I-like SAM-binding methyltransferase superfamily. RNA M5U methyltransferase family.

This is an uncharacterized protein from Nanoarchaeum equitans (strain Kin4-M).